The primary structure comprises 303 residues: Probable cell division protein WhiA (303 aa).

Positions 272 to 303 form a DNA-binding region, H-T-H motif; it reads SIQQLADSLSTPLTKSGVNHRLRKINKIADEL.

This sequence belongs to the WhiA family.

Its function is as follows. Involved in cell division and chromosome segregation. The polypeptide is Probable cell division protein WhiA (Streptococcus pneumoniae (strain ATCC 700669 / Spain 23F-1)).